The following is a 459-amino-acid chain: Argininosuccinate lyase (459 aa).

Belongs to the lyase 1 family. Argininosuccinate lyase subfamily.

It localises to the cytoplasm. It carries out the reaction 2-(N(omega)-L-arginino)succinate = fumarate + L-arginine. It participates in amino-acid biosynthesis; L-arginine biosynthesis; L-arginine from L-ornithine and carbamoyl phosphate: step 3/3. This Geobacillus sp. (strain WCH70) protein is Argininosuccinate lyase.